The sequence spans 532 residues: FRIGIDA-like protein 4b (532 aa).

This sequence belongs to the Frigida family. In terms of tissue distribution, expressed in leaves, shoot apex, flowers and during seed development.

The chain is FRIGIDA-like protein 4b (FRL4B) from Arabidopsis thaliana (Mouse-ear cress).